A 259-amino-acid polypeptide reads, in one-letter code: Protein POLYCHOME (259 aa).

The disordered stretch occupies residues 236–259; that stretch reads KMKSTPSAKRAEREKRVRTLMSMR.

As to quaternary structure, interacts with APC/C activators such as APC5, FZR2, FZR3, CDC20.1 and CDC20.5. In terms of tissue distribution, expressed mainly in actively dividing cells (e.g. central cylinder of the root tip, young leaves and vascular tissues).

It is found in the nucleus. Negative regulator of the anaphase-promoting complex/cyclosome (APC/C) ubiquitin ligase required for proper mitotic progression and cell fate determination; inhibits premature cell differentiation. Prevents DNA endoreplication by promoting the maintenance of the mitotic state by preferentially inhibiting APC/C(FZR) and triggering cyclins accumulation (e.g. CYCB1-1, CYCB1-2 and CYCA2-3) in a temporal manner. Required for megagametophyte and endosperm development. Counteracts the activity of CCS52A1 thus inhibiting the turnover of CYCA2-3. Confers immunity to bacterial pathogens (e.g. Pseudomonas syringae pv. tomato DC3000), which is associated with increased expression of disease resistance (R) genes. The chain is Protein POLYCHOME (PYM) from Arabidopsis thaliana (Mouse-ear cress).